Consider the following 456-residue polypeptide: Bifunctional protein GlmU (456 aa).

The segment at 1–228 is pyrophosphorylase; that stretch reads MSARLAAIVL…PQEIFGINDR (228 aa). Residues 10 to 13, Lys-24, Gln-75, and 80 to 81 each bind UDP-N-acetyl-alpha-D-glucosamine; these read LAAG and GT. Position 105 (Asp-105) interacts with Mg(2+). Gly-142, Glu-157, Asn-172, and Asn-226 together coordinate UDP-N-acetyl-alpha-D-glucosamine. Asn-226 lines the Mg(2+) pocket. The interval 229-249 is linker; the sequence is LQLSQASRILNERTLVGLMLS. The segment at 250-456 is N-acetyltransferase; the sequence is GVTIVDPLRV…KAPYERTEDG (207 aa). UDP-N-acetyl-alpha-D-glucosamine contacts are provided by Arg-331 and Lys-349. His-361 (proton acceptor) is an active-site residue. UDP-N-acetyl-alpha-D-glucosamine contacts are provided by Tyr-364 and Asn-375. Residues Ala-378, 384–385, Ala-421, and Arg-437 contribute to the acetyl-CoA site; that span reads NY.

This sequence in the N-terminal section; belongs to the N-acetylglucosamine-1-phosphate uridyltransferase family. The protein in the C-terminal section; belongs to the transferase hexapeptide repeat family. As to quaternary structure, homotrimer. Mg(2+) is required as a cofactor.

It localises to the cytoplasm. It catalyses the reaction alpha-D-glucosamine 1-phosphate + acetyl-CoA = N-acetyl-alpha-D-glucosamine 1-phosphate + CoA + H(+). The enzyme catalyses N-acetyl-alpha-D-glucosamine 1-phosphate + UTP + H(+) = UDP-N-acetyl-alpha-D-glucosamine + diphosphate. Its pathway is nucleotide-sugar biosynthesis; UDP-N-acetyl-alpha-D-glucosamine biosynthesis; N-acetyl-alpha-D-glucosamine 1-phosphate from alpha-D-glucosamine 6-phosphate (route II): step 2/2. The protein operates within nucleotide-sugar biosynthesis; UDP-N-acetyl-alpha-D-glucosamine biosynthesis; UDP-N-acetyl-alpha-D-glucosamine from N-acetyl-alpha-D-glucosamine 1-phosphate: step 1/1. It functions in the pathway bacterial outer membrane biogenesis; LPS lipid A biosynthesis. Functionally, catalyzes the last two sequential reactions in the de novo biosynthetic pathway for UDP-N-acetylglucosamine (UDP-GlcNAc). The C-terminal domain catalyzes the transfer of acetyl group from acetyl coenzyme A to glucosamine-1-phosphate (GlcN-1-P) to produce N-acetylglucosamine-1-phosphate (GlcNAc-1-P), which is converted into UDP-GlcNAc by the transfer of uridine 5-monophosphate (from uridine 5-triphosphate), a reaction catalyzed by the N-terminal domain. The protein is Bifunctional protein GlmU of Gloeobacter violaceus (strain ATCC 29082 / PCC 7421).